The sequence spans 632 residues: Deoxynucleoside triphosphate triphosphohydrolase SAMHD1 (632 aa).

Residues 1–22 (MKGINGAKRVRHDASPSAQDGY) are disordered. In terms of domain architecture, SAM spans 44–107 (WDVEEVCLFL…LSCLRMLCQN (64 aa)). The GTP site is built by K113 and V114. N116 contributes to the dGTP binding site. Residues D134, Q139, and R142 each contribute to the GTP site. 4 residues coordinate dGTP: Q146, L147, V153, and R161. Position 146 (Q146) interacts with dATP. Q146 provides a ligand contact to dCTP. Residue Q146 participates in dTTP binding. R161 contacts dATP. Position 161 (R161) interacts with dCTP. R161 provides a ligand contact to dTTP. In terms of domain architecture, HD spans 161-321 (RFEHSIGVGY…GIDVDKWDYF (161 aa)). Residues H164, H203, and D204 each contribute to the Mn(2+) site. The dATP site is built by H207 and H212. H207 and H212 together coordinate dCTP. DTTP is bound by residues H207 and H212. H230 is an active-site residue. Position 316 (D316) interacts with Mn(2+). Positions 317, 320, 324, 338, 357, 359, 363, 371, 379, 380, 381, and 382 each coordinate dGTP. DATP-binding residues include K317, Y320, and D324. The dCTP site is built by K317, Y320, and D324. The dTTP site is built by K317, Y320, and D324. R371 contacts dATP. R371 serves as a coordination point for dCTP. Q380 serves as a coordination point for dATP. Q380 contacts dCTP. A dTTP-binding site is contributed by Q380. Residues R456, K460, and K529 each contribute to the GTP site. K529 is a binding site for dGTP.

It belongs to the SAMHD1 family. Homodimer; in absence of GTP and dNTP. Homotetramer; in GTP- and dNTP-bound form. Interacts with rbbp8/CtIP. It depends on Zn(2+) as a cofactor.

The protein localises to the nucleus. It localises to the chromosome. The catalysed reaction is a 2'-deoxyribonucleoside 5'-triphosphate + H2O = a 2'-deoxyribonucleoside + triphosphate + H(+). It carries out the reaction dATP + H2O = 2'-deoxyadenosine + triphosphate + H(+). It catalyses the reaction dCTP + H2O = 2'-deoxycytidine + triphosphate + H(+). The enzyme catalyses dGTP + H2O = 2'-deoxyguanosine + triphosphate + H(+). The catalysed reaction is dTTP + H2O = thymidine + triphosphate + H(+). Allosterically activated and regulated via the combined actions of GTP and dNTPs (dATP, dGTP, dTTP and dCTP): Allosteric site 1 binds GTP, while allosteric site 2 binds dNTP. Allosteric activation promotes the formation of highly active homotetramers. In terms of biological role, protein that acts both as a host restriction factor involved in defense response to virus and as a regulator of DNA end resection at stalled replication forks. Has deoxynucleoside triphosphate (dNTPase) activity, which is required to restrict infection by viruses: dNTPase activity reduces cellular dNTP levels to levels too low for retroviral reverse transcription to occur, blocking early-stage virus replication in dendritic and other myeloid cells. Functions during S phase at stalled DNA replication forks to promote the resection of gapped or reversed forks: acts by stimulating the exonuclease activity of mre11, activating the ATR-CHK1 pathway and allowing the forks to restart replication. Ability to promote DNA end resection at stalled replication forks is independent of dNTPase activity. This Xenopus laevis (African clawed frog) protein is Deoxynucleoside triphosphate triphosphohydrolase SAMHD1.